A 479-amino-acid polypeptide reads, in one-letter code: Acyltransferase easC (479 aa).

The Proton acceptor role is filled by histidine 161.

The protein belongs to the plant acyltransferase family. Monomer.

It functions in the pathway antibiotic biosynthesis. Functionally, acyltransferase; part of the gene cluster that mediates the biosynthesis of emericellamides, secondary metabolites acting as antibiotics. The biosynthesis of emericellamides initiates from the highly reducing polyketide synthase easB which catalyzes the formation of the linear polyketide chain. EasB produces several polyketides that can be further processed by the downstream enzymes. The polyketides are released from easB as linear polyketide carboxylic acids, which are converted to CoA thioesters by the acyl-CoA ligase easD. The substrates are then loaded onto the acyltransferase easC, which shuttles them to the first thiolation (T) domain of the nonribosomal peptide synthetase easA. EasA then performs condensation of the polyketides with one glycine, two alanine, one valine and one leucine residues. A last step of cyclization leads to the production of emericellamides. The chain is Acyltransferase easC from Emericella nidulans (strain FGSC A4 / ATCC 38163 / CBS 112.46 / NRRL 194 / M139) (Aspergillus nidulans).